The chain runs to 222 residues: Potassium-transporting ATPase KdpC subunit (222 aa).

Residues 13–35 (WAGLRSLLVLTVVTGVLYPLAVT) form a helical membrane-spanning segment. Positions 136–162 (TADHKVKPSDVPADAVTSSGSGLDPDI) are disordered.

Belongs to the KdpC family. In terms of assembly, the system is composed of three essential subunits: KdpA, KdpB and KdpC.

The protein localises to the cell membrane. In terms of biological role, part of the high-affinity ATP-driven potassium transport (or Kdp) system, which catalyzes the hydrolysis of ATP coupled with the electrogenic transport of potassium into the cytoplasm. This subunit acts as a catalytic chaperone that increases the ATP-binding affinity of the ATP-hydrolyzing subunit KdpB by the formation of a transient KdpB/KdpC/ATP ternary complex. This Streptomyces avermitilis (strain ATCC 31267 / DSM 46492 / JCM 5070 / NBRC 14893 / NCIMB 12804 / NRRL 8165 / MA-4680) protein is Potassium-transporting ATPase KdpC subunit.